The chain runs to 141 residues: Hemoglobin subunit alpha (141 aa).

The region spanning 1–141 (VLSGTDKSNI…VSTVLTSKYR (141 aa)) is the Globin domain. Position 3 is a phosphoserine (Ser3). Lys7 and Lys11 each carry N6-succinyllysine. N6-acetyllysine; alternate is present on Lys16. Lys16 is subject to N6-succinyllysine; alternate. The residue at position 24 (Tyr24) is a Phosphotyrosine. Residue Ser35 is modified to Phosphoserine. N6-succinyllysine is present on Lys40. Position 49 is a phosphoserine (Ser49). His58 contributes to the O2 binding site. His87 is a heme b binding site. Position 102 is a phosphoserine (Ser102). Thr108 carries the post-translational modification Phosphothreonine. Ser124 is subject to Phosphoserine. 2 positions are modified to phosphothreonine: Thr134 and Thr137. A Phosphoserine modification is found at Ser138.

This sequence belongs to the globin family. In terms of assembly, heterotetramer of two alpha chains and two beta chains. As to expression, red blood cells.

Involved in oxygen transport from the lung to the various peripheral tissues. In terms of biological role, hemopressin acts as an antagonist peptide of the cannabinoid receptor CNR1. Hemopressin-binding efficiently blocks cannabinoid receptor CNR1 and subsequent signaling. In Talpa europaea (European mole), this protein is Hemoglobin subunit alpha (HBA).